A 455-amino-acid polypeptide reads, in one-letter code: Chromosomal replication initiator protein DnaA (455 aa).

The interval M1 to Y73 is domain I, interacts with DnaA modulators. The interval Y73 to N114 is domain II. The interval Q115–I331 is domain III, AAA+ region. ATP-binding residues include G159, G161, K162, and T163. The segment at S332 to N455 is domain IV, binds dsDNA.

This sequence belongs to the DnaA family. In terms of assembly, oligomerizes as a right-handed, spiral filament on DNA at oriC.

Its subcellular location is the cytoplasm. Functionally, plays an essential role in the initiation and regulation of chromosomal replication. ATP-DnaA binds to the origin of replication (oriC) to initiate formation of the DNA replication initiation complex once per cell cycle. Binds the DnaA box (a 9 base pair repeat at the origin) and separates the double-stranded (ds)DNA. Forms a right-handed helical filament on oriC DNA; dsDNA binds to the exterior of the filament while single-stranded (ss)DNA is stabiized in the filament's interior. The ATP-DnaA-oriC complex binds and stabilizes one strand of the AT-rich DNA unwinding element (DUE), permitting loading of DNA polymerase. After initiation quickly degrades to an ADP-DnaA complex that is not apt for DNA replication. Binds acidic phospholipids. The sequence is that of Chromosomal replication initiator protein DnaA from Crocosphaera subtropica (strain ATCC 51142 / BH68) (Cyanothece sp. (strain ATCC 51142)).